Reading from the N-terminus, the 130-residue chain is Large ribosomal subunit protein bL19 (130 aa).

Belongs to the bacterial ribosomal protein bL19 family.

Its function is as follows. This protein is located at the 30S-50S ribosomal subunit interface and may play a role in the structure and function of the aminoacyl-tRNA binding site. The polypeptide is Large ribosomal subunit protein bL19 (Cupriavidus metallidurans (strain ATCC 43123 / DSM 2839 / NBRC 102507 / CH34) (Ralstonia metallidurans)).